Reading from the N-terminus, the 180-residue chain is Inner membrane-spanning protein YciB (180 aa).

The next 5 helical transmembrane spans lie at 22-42 (IFVA…FTWF), 50-70 (MTLV…AFHS), 72-92 (LFIK…LLVS), 121-141 (MSWA…AFWL), and 149-169 (FKVF…GVYI).

This sequence belongs to the YciB family.

The protein localises to the cell inner membrane. In terms of biological role, plays a role in cell envelope biogenesis, maintenance of cell envelope integrity and membrane homeostasis. The sequence is that of Inner membrane-spanning protein YciB from Yersinia enterocolitica serotype O:8 / biotype 1B (strain NCTC 13174 / 8081).